We begin with the raw amino-acid sequence, 313 residues long: Methionyl-tRNA formyltransferase (313 aa).

109-112 (SLLP) contacts (6S)-5,6,7,8-tetrahydrofolate.

It belongs to the Fmt family.

It carries out the reaction L-methionyl-tRNA(fMet) + (6R)-10-formyltetrahydrofolate = N-formyl-L-methionyl-tRNA(fMet) + (6S)-5,6,7,8-tetrahydrofolate + H(+). Its function is as follows. Attaches a formyl group to the free amino group of methionyl-tRNA(fMet). The formyl group appears to play a dual role in the initiator identity of N-formylmethionyl-tRNA by promoting its recognition by IF2 and preventing the misappropriation of this tRNA by the elongation apparatus. This chain is Methionyl-tRNA formyltransferase, found in Thermotoga maritima (strain ATCC 43589 / DSM 3109 / JCM 10099 / NBRC 100826 / MSB8).